Consider the following 128-residue polypeptide: MVGKHCILELYDCDKSKLDDEAFLRTTITTAAKRAGATLLNLITHRFEPQGVTGLALLAESHISIHTWPETGYAAVDVFTCGDHTMPEKACQHLRDELKAMNHALRSFLRETPAAVAELERTPECTPR.

The active-site Schiff-base intermediate with substrate; via pyruvic acid is serine 61. Serine 61 carries the pyruvic acid (Ser); by autocatalysis modification. Histidine 66 acts as the Proton acceptor; for processing activity in catalysis. Cysteine 81 serves as the catalytic Proton donor; for catalytic activity.

The protein belongs to the prokaryotic AdoMetDC family. Type 1 subfamily. As to quaternary structure, heterotetramer of two alpha and two beta chains arranged as a dimer of alpha/beta heterodimers. Requires pyruvate as cofactor. Post-translationally, is synthesized initially as an inactive proenzyme. Formation of the active enzyme involves a self-maturation process in which the active site pyruvoyl group is generated from an internal serine residue via an autocatalytic post-translational modification. Two non-identical subunits are generated from the proenzyme in this reaction, and the pyruvate is formed at the N-terminus of the alpha chain, which is derived from the carboxyl end of the proenzyme. The post-translation cleavage follows an unusual pathway, termed non-hydrolytic serinolysis, in which the side chain hydroxyl group of the serine supplies its oxygen atom to form the C-terminus of the beta chain, while the remainder of the serine residue undergoes an oxidative deamination to produce ammonia and the pyruvoyl group blocking the N-terminus of the alpha chain.

The enzyme catalyses S-adenosyl-L-methionine + H(+) = S-adenosyl 3-(methylsulfanyl)propylamine + CO2. It functions in the pathway amine and polyamine biosynthesis; S-adenosylmethioninamine biosynthesis; S-adenosylmethioninamine from S-adenosyl-L-methionine: step 1/1. Functionally, catalyzes the decarboxylation of S-adenosylmethionine to S-adenosylmethioninamine (dcAdoMet), the propylamine donor required for the synthesis of the polyamines spermine and spermidine from the diamine putrescine. The protein is S-adenosylmethionine decarboxylase proenzyme of Synechococcus sp. (strain WH7803).